Consider the following 1496-residue polypeptide: Rap guanine nucleotide exchange factor 2 (1496 aa).

Disordered stretches follow at residues 40–59 (HVSS…SSSL) and 68–101 (SEAG…SDPL). The span at 83–94 (VDSEDDDDEEDI) shows a compositional bias: acidic residues. 135–254 (AFANMTMSVR…VEEEGEIVMV (120 aa)) is an a nucleoside 3',5'-cyclic phosphate binding site. The N-terminal Ras-GEF domain occupies 267-380 (KGHIVIKGTS…RLLNIACAAK (114 aa)). A PDZ domain is found at 385-470 (LMTLTKPSRE…ITVKTNLFVF (86 aa)). Residue Ser-501 is modified to Phosphoserine. A Ras-associating domain is found at 606 to 692 (PDQVLRVFKA…GRYYLKNNME (87 aa)). Thr-644 carries the post-translational modification Phosphothreonine; by PLK2. A Ras-GEF domain is found at 717–944 (STVEVATQLS…SQGSANATVL (228 aa)). Ser-806 carries the post-translational modification Phosphoserine; by PLK2. Ser-930 is modified (phosphoserine). Ser-933 and Ser-1022 each carry phosphoserine; by PLK2. The segment at 1002–1051 (PATSTLPKNPGDKKPVKSETSPVAPRAGPQQKVQPQQPLAQPQPPHKVSQ) is disordered. Positions 1030–1041 (PQQKVQPQQPLA) are enriched in low complexity. Residues Ser-1079, Ser-1088, Ser-1094, Ser-1115, Ser-1119, and Ser-1158 each carry the phosphoserine modification. Positions 1093-1159 (GSLERHRKQA…RSSIVSNSSF (67 aa)) are disordered. Low complexity-rich tracts occupy residues 1110 to 1124 (SSQL…QSSP) and 1140 to 1159 (SDSG…NSSF). A Phosphoserine; by PLK2 modification is found at Ser-1175. 3 disordered regions span residues 1224–1256 (STEE…SGSH), 1303–1369 (STKY…EEAK), and 1390–1496 (RKEG…VSAV). Over residues 1227 to 1237 (ELSHDQGDRAS) the composition is skewed to basic and acidic residues. 2 stretches are compositionally biased toward polar residues: residues 1246–1256 (GSWTSCSSGSH) and 1306–1330 (YNRQ…SSTG). Positions 1440-1455 (PTEAPAPGQTPPAAAA) are enriched in low complexity. Acidic residues predominate over residues 1485–1496 (AEEDEDEQVSAV).

This sequence belongs to the RAPGEF2 family. In terms of assembly, found in a complex, at least composed of KIDINS220, MAGI2, NTRK1 and RAPGEF2; the complex is mainly formed at late endosomes in a neuronal growth factor (NGF)-dependent manner. Interacts (via C-terminal domain) with NEDD4 (via WW domains); this interaction leads to ubiquitination and degradation via the proteasome pathway in a cAMP-independent manner. Interacts with MAGI1 (via PDZ domain). Interacts with ADRB1 (via C-terminal PDZ motif); the interaction is direct. Interacts (via Ras-associating domain) with RAP1A (via GTP-bound active form). Interacts weakly with HRAS (via GDP- and GTP-bound forms). Interacts (via C-terminal domain) with MAGI2 (via PDZ and WW domains). Interacts with CDH1, CTNNB1 and TJP1. In terms of processing, ubiquitinated by NEDD4, leading to proteasomal degradation. Phosphorylation by PLK2 promotes its activity. In terms of tissue distribution, expressed in all layers of the cerebral cortex, hippocampus and cerebellum. Expressed in the cortical plate, cingulate cortex and the subventricular zone. Expressed in neurons and endocrine cells (at protein level). Expressed in melanoma cells.

It is found in the cytoplasm. The protein resides in the perinuclear region. It localises to the cell membrane. The protein localises to the late endosome. Its subcellular location is the cell junction. In terms of biological role, functions as a guanine nucleotide exchange factor (GEF), which activates Rap and Ras family of small GTPases by exchanging bound GDP for free GTP in a cAMP-dependent manner. Serves as a link between cell surface receptors and Rap/Ras GTPases in intracellular signaling cascades. Also acts as an effector for Rap1 by direct association with Rap1-GTP thereby leading to the amplification of Rap1-mediated signaling. Shows weak activity on HRAS. It is controversial whether RAPGEF2 binds cAMP and cGMP or not. Its binding to ligand-activated beta-1 adrenergic receptor ADRB1 leads to the Ras activation through the G(s)-alpha signaling pathway. Involved in the cAMP-induced Ras and Erk1/2 signaling pathway that leads to sustained inhibition of long term melanogenesis by reducing dendrite extension and melanin synthesis. Also provides inhibitory signals for cell proliferation of melanoma cells and promotes their apoptosis in a cAMP-independent nanner. Regulates cAMP-induced neuritogenesis by mediating the Rap1/B-Raf/ERK signaling through a pathway that is independent on both PKA and RAPGEF3/RAPGEF4. Involved in neuron migration and in the formation of the major forebrain fiber connections forming the corpus callosum, the anterior commissure and the hippocampal commissure during brain development. Involved in neuronal growth factor (NGF)-induced sustained activation of Rap1 at late endosomes and in brain-derived neurotrophic factor (BDNF)-induced axon outgrowth of hippocampal neurons. Plays a role in the regulation of embryonic blood vessel formation and in the establishment of basal junction integrity and endothelial barrier function. May be involved in the regulation of the vascular endothelial growth factor receptor KDR and cadherin CDH5 expression at allantois endothelial cell-cell junctions. The polypeptide is Rap guanine nucleotide exchange factor 2 (Rapgef2) (Mus musculus (Mouse)).